A 278-amino-acid polypeptide reads, in one-letter code: Potassium/proton antiporter CemA (278 aa).

The next 4 helical transmembrane spans lie at Ile-61–Gly-81, Ala-155–Thr-175, Ile-203–Ile-223, and Phe-238–Ile-258.

Belongs to the CemA family.

Its subcellular location is the plastid. It is found in the chloroplast inner membrane. The enzyme catalyses K(+)(in) + H(+)(out) = K(+)(out) + H(+)(in). In terms of biological role, contributes to K(+)/H(+) antiport activity by supporting proton efflux to control proton extrusion and homeostasis in chloroplasts in a light-dependent manner to modulate photosynthesis. Prevents excessive induction of non-photochemical quenching (NPQ) under continuous-light conditions. Indirectly promotes efficient inorganic carbon uptake into chloroplasts. The polypeptide is Potassium/proton antiporter CemA (Porphyra purpurea (Red seaweed)).